The sequence spans 272 residues: Dermonecrotic toxin LspaSicTox-alphaII1 (272 aa).

The active site involves His5. Mg(2+)-binding residues include Glu25 and Asp27. The active-site Nucleophile is the His41. 2 cysteine pairs are disulfide-bonded: Cys45–Cys51 and Cys47–Cys190. A Mg(2+)-binding site is contributed by Asp85.

It belongs to the arthropod phospholipase D family. Class II subfamily. The cofactor is Mg(2+). As to expression, expressed by the venom gland.

It localises to the secreted. The catalysed reaction is an N-(acyl)-sphingosylphosphocholine = an N-(acyl)-sphingosyl-1,3-cyclic phosphate + choline. It catalyses the reaction an N-(acyl)-sphingosylphosphoethanolamine = an N-(acyl)-sphingosyl-1,3-cyclic phosphate + ethanolamine. The enzyme catalyses a 1-acyl-sn-glycero-3-phosphocholine = a 1-acyl-sn-glycero-2,3-cyclic phosphate + choline. It carries out the reaction a 1-acyl-sn-glycero-3-phosphoethanolamine = a 1-acyl-sn-glycero-2,3-cyclic phosphate + ethanolamine. Functionally, dermonecrotic toxins cleave the phosphodiester linkage between the phosphate and headgroup of certain phospholipids (sphingolipid and lysolipid substrates), forming an alcohol (often choline) and a cyclic phosphate. This toxin acts on sphingomyelin (SM). It may also act on ceramide phosphoethanolamine (CPE), lysophosphatidylcholine (LPC) and lysophosphatidylethanolamine (LPE), but not on lysophosphatidylserine (LPS), and lysophosphatidylglycerol (LPG). It acts by transphosphatidylation, releasing exclusively cyclic phosphate products as second products. Induces dermonecrosis, hemolysis, increased vascular permeability, edema, inflammatory response, and platelet aggregation. This chain is Dermonecrotic toxin LspaSicTox-alphaII1, found in Loxosceles spadicea (Recluse spider).